Reading from the N-terminus, the 512-residue chain is 2-isopropylmalate synthase (512 aa).

A Pyruvate carboxyltransferase domain is found at 5-268 (LIIFDTTLRD…DIGIDTQQIL (264 aa)). Mn(2+) is bound by residues Asp-14, His-202, His-204, and Asn-239. A regulatory domain region spans residues 394-512 (GFVSLSQHSE…SKADRVAAQG (119 aa)).

This sequence belongs to the alpha-IPM synthase/homocitrate synthase family. LeuA type 1 subfamily. As to quaternary structure, homodimer. Mn(2+) is required as a cofactor.

It localises to the cytoplasm. It carries out the reaction 3-methyl-2-oxobutanoate + acetyl-CoA + H2O = (2S)-2-isopropylmalate + CoA + H(+). Its pathway is amino-acid biosynthesis; L-leucine biosynthesis; L-leucine from 3-methyl-2-oxobutanoate: step 1/4. Its function is as follows. Catalyzes the condensation of the acetyl group of acetyl-CoA with 3-methyl-2-oxobutanoate (2-ketoisovalerate) to form 3-carboxy-3-hydroxy-4-methylpentanoate (2-isopropylmalate). The sequence is that of 2-isopropylmalate synthase from Polaromonas naphthalenivorans (strain CJ2).